We begin with the raw amino-acid sequence, 1389 residues long: DNA-directed RNA polymerase subunit beta'' (1389 aa).

Zn(2+)-binding residues include cysteine 224, cysteine 295, cysteine 302, and cysteine 305.

This sequence belongs to the RNA polymerase beta' chain family. RpoC2 subfamily. In terms of assembly, in plastids the minimal PEP RNA polymerase catalytic core is composed of four subunits: alpha, beta, beta', and beta''. When a (nuclear-encoded) sigma factor is associated with the core the holoenzyme is formed, which can initiate transcription. Zn(2+) serves as cofactor.

Its subcellular location is the plastid. It localises to the chloroplast. The enzyme catalyses RNA(n) + a ribonucleoside 5'-triphosphate = RNA(n+1) + diphosphate. DNA-dependent RNA polymerase catalyzes the transcription of DNA into RNA using the four ribonucleoside triphosphates as substrates. This chain is DNA-directed RNA polymerase subunit beta'', found in Atropa belladonna (Belladonna).